Here is a 131-residue protein sequence, read N- to C-terminus: Large ribosomal subunit protein bL12c (131 aa).

The tract at residues 107 to 131 (QGVSKDDAEASKKQLEDAGAKVKIS) is disordered. The span at 110 to 131 (SKDDAEASKKQLEDAGAKVKIS) shows a compositional bias: basic and acidic residues.

The protein belongs to the bacterial ribosomal protein bL12 family. As to quaternary structure, homodimer. Part of the ribosomal stalk of the 50S ribosomal subunit. Forms a multimeric L10(L12)X complex, where L10 forms an elongated spine to which 2 to 4 L12 dimers bind in a sequential fashion. Binds GTP-bound translation factors.

It localises to the plastid. The protein resides in the chloroplast. Its function is as follows. Forms part of the ribosomal stalk which helps the ribosome interact with GTP-bound translation factors. Is thus essential for accurate translation. The protein is Large ribosomal subunit protein bL12c of Chlorella vulgaris (Green alga).